Reading from the N-terminus, the 560-residue chain is Excitatory amino acid transporter 5 (560 aa).

Residues 1–16 (MVPHAILARGRDVCRR) lie on the Cytoplasmic side of the membrane. Transmembrane regions (helical) follow at residues 17–37 (NGLLILSVLSVIVGCLLGFFL), 60–80 (MLKMMILPLVVSSLMSGLASL), and 94–114 (AYYLWTTFMAVIVGIFMVSII). The Extracellular portion of the chain corresponds to 115–216 (HPGSAAQKET…EVVYKSEPGT (102 aa)). N-linked (GlcNAc...) asparagine glycosylation occurs at Asn-191. 7 helical membrane passes run 217–237 (SDGMNVLGIVFFSATMGIMLG), 260–280 (IVAVAVWYFPFGIVFLIAGKI), 300–320 (VVCGLVLHGLFILPLLYFFIT), 330–350 (GILQALLIALATSSSSATLPI), 372–392 (VGATINMDGTALYEAVAAIFI), 414–434 (AASIGAAGIPQAGLVTMVIVL), and 457–477 (FRTMINVLGDALAAGIMAHIC).

Belongs to the dicarboxylate/amino acid:cation symporter (DAACS) (TC 2.A.23) family. SLC1A7 subfamily. Interacts with the PDZ domains of DLG4. In terms of tissue distribution, expressed primarily in retina. Detectable in liver, heart, muscle and brain.

Its subcellular location is the photoreceptor inner segment membrane. The protein resides in the synaptic cell membrane. The catalysed reaction is K(+)(in) + L-glutamate(out) + 3 Na(+)(out) + H(+)(out) = K(+)(out) + L-glutamate(in) + 3 Na(+)(in) + H(+)(in). It carries out the reaction K(+)(in) + L-aspartate(out) + 3 Na(+)(out) + H(+)(out) = K(+)(out) + L-aspartate(in) + 3 Na(+)(in) + H(+)(in). It catalyses the reaction D-aspartate(out) + K(+)(in) + 3 Na(+)(out) + H(+)(out) = D-aspartate(in) + K(+)(out) + 3 Na(+)(in) + H(+)(in). Functionally, sodium-dependent, high-affinity amino acid transporter that mediates the uptake of L-glutamate and also L-aspartate and D-aspartate. Functions as a symporter that transports one amino acid molecule together with two or three Na(+) ions and one proton, in parallel with the counter-transport of one K(+) ion. Acts primarily as an inhibitory glutamate-gated chloride channel being a major inhibitory presynaptic receptor at mammalian rod bipolar cell axon terminals. Glutamate binding gates a large Cl(-) conductance that mediates inhibition, affecting visual processing in the retina. This chain is Excitatory amino acid transporter 5, found in Homo sapiens (Human).